The sequence spans 493 residues: Cobyric acid synthase (493 aa).

Residues 252-443 (DLQITVVRLP…LHGLFDNGPW (192 aa)) enclose the GATase cobBQ-type domain. The Nucleophile role is filled by Cys-333. His-435 is a catalytic residue.

Belongs to the CobB/CobQ family. CobQ subfamily.

The protein operates within cofactor biosynthesis; adenosylcobalamin biosynthesis. In terms of biological role, catalyzes amidations at positions B, D, E, and G on adenosylcobyrinic A,C-diamide. NH(2) groups are provided by glutamine, and one molecule of ATP is hydrogenolyzed for each amidation. This is Cobyric acid synthase from Nostoc sp. (strain PCC 7120 / SAG 25.82 / UTEX 2576).